The primary structure comprises 322 residues: Peroxisomal adenine nucleotide carrier 1 (322 aa).

Solcar repeat units lie at residues 5–94 (LESV…FKRV), 104–184 (IGTK…LKQH), and 202–298 (LSAF…ITAT). 6 helical membrane-spanning segments follow: residues 8–28 (VSEATSGAIGSLLSTTILYPL), 104–124 (IGTKANLLIAAAAGACTSVLI), 158–178 (FDGLGISLLLTSNPAIQYTVF), 201–221 (VLSAFMAFVLGAVSKSVATVL), 254–274 (IPGVVYAIWRKEGMLGFFKGL), and 286–306 (ALLLMIKEKITATTWILILAI).

It belongs to the mitochondrial carrier (TC 2.A.29) family. Expressed in stamens, pollen grains, seeds, leaves, cotyledons, roots, stems, flowers, hypocotyls and siliques.

It localises to the peroxisome membrane. Its function is as follows. Peroxisomal adenine nucleotide transporter catalyzing the counterexchange of ATP with AMP. ATP is needed by reactions that generate acyl-CoA for peroxisomal fatty acid beta-oxidation during postgerminative growth. Required for the beta-oxidation reactions involved in auxin biosynthesis and for the conversion of seed-reserved triacylglycerols into sucrose that is necessary for growth before the onset of photosynthesis. This Arabidopsis thaliana (Mouse-ear cress) protein is Peroxisomal adenine nucleotide carrier 1 (PNC1).